A 318-amino-acid chain; its full sequence is Transaldolase (318 aa).

The Schiff-base intermediate with substrate role is filled by Lys-131.

This sequence belongs to the transaldolase family. Type 1 subfamily. Homodimer.

It is found in the cytoplasm. It carries out the reaction D-sedoheptulose 7-phosphate + D-glyceraldehyde 3-phosphate = D-erythrose 4-phosphate + beta-D-fructose 6-phosphate. The protein operates within carbohydrate degradation; pentose phosphate pathway; D-glyceraldehyde 3-phosphate and beta-D-fructose 6-phosphate from D-ribose 5-phosphate and D-xylulose 5-phosphate (non-oxidative stage): step 2/3. Transaldolase is important for the balance of metabolites in the pentose-phosphate pathway. The protein is Transaldolase of Buchnera aphidicola subsp. Cinara cedri (strain Cc).